The chain runs to 374 residues: RNA ligase 1 (374 aa).

The ATP site is built by tyrosine 37, arginine 54, and lysine 75. The active-site N6-AMP-lysine intermediate is the lysine 99. ATP-binding residues include glutamate 159, lysine 240, and lysine 242. Aspartate 272 is a binding site for Mg(2+).

The protein belongs to the Tequatrovirus RNA ligase 1 family. The cofactor is Mg(2+).

The catalysed reaction is ATP + (ribonucleotide)n-3'-hydroxyl + 5'-phospho-(ribonucleotide)m = (ribonucleotide)n+m + AMP + diphosphate.. Functionally, involved in countering a host defense mechanism which, following viral infection, activates the host anticodon nuclease and shuts off viral translation. Repairs 5'-PO4 and 3'-OH groups in the cleaved host tRNA. The nick ligation reaction entails three nucleotidyl transfer steps. In the first step, the RNA ligase reacts with ATP in the absence of nucleic acid to form a covalent ligase-AMP intermediate and release pyrophosphate. In step 2, the ligase-AMP binds to the nicked duplex nucleic acid and transfers the adenylate to the 5'-PO4 terminus to form an adenylylated nicked intermediate. In step 3, the RNA ligase directs the attack of the nick 3'-OH on the 5'-phosphoanhydride linkage, resulting in a repaired 3'-5' phosphodiester and release of AMP. This chain is RNA ligase 1 (63), found in Enterobacteria phage T4 (Bacteriophage T4).